The following is a 454-amino-acid chain: Tyrosine aminotransferase (454 aa).

Methionine 1 is subject to N-acetylmethionine. The residue at position 280 (lysine 280) is an N6-(pyridoxal phosphate)lysine. Serine 448 carries the phosphoserine modification.

Belongs to the class-I pyridoxal-phosphate-dependent aminotransferase family. In terms of assembly, homodimer. Pyridoxal 5'-phosphate serves as cofactor.

It carries out the reaction L-tyrosine + 2-oxoglutarate = 3-(4-hydroxyphenyl)pyruvate + L-glutamate. Its pathway is amino-acid degradation; L-phenylalanine degradation; acetoacetate and fumarate from L-phenylalanine: step 2/6. Functionally, transaminase involved in tyrosine breakdown. Converts tyrosine to p-hydroxyphenylpyruvate. Can catalyze the reverse reaction, using glutamic acid, with 2-oxoglutarate as cosubstrate (in vitro). Has much lower affinity and transaminase activity towards phenylalanine. The protein is Tyrosine aminotransferase (TAT) of Homo sapiens (Human).